A 301-amino-acid chain; its full sequence is Pyridoxal 5'-phosphate synthase subunit Pdx1 (301 aa).

D26 serves as a coordination point for D-ribose 5-phosphate. The Schiff-base intermediate with D-ribose 5-phosphate role is filled by K83. D-ribose 5-phosphate is bound at residue G155. Residue R167 participates in D-glyceraldehyde 3-phosphate binding. D-ribose 5-phosphate is bound by residues G216 and G237–S238.

It belongs to the PdxS/SNZ family. In terms of assembly, homohexamer and homododecamer. In the presence of Pdx2, forms a dodecamer of heterodimers.

The protein resides in the cytoplasm. The catalysed reaction is aldehydo-D-ribose 5-phosphate + D-glyceraldehyde 3-phosphate + L-glutamine = pyridoxal 5'-phosphate + L-glutamate + phosphate + 3 H2O + H(+). It participates in cofactor biosynthesis; pyridoxal 5'-phosphate biosynthesis. Functionally, catalyzes the formation of pyridoxal 5'-phosphate from ribose 5-phosphate (RBP), glyceraldehyde 3-phosphate (G3P) and ammonia. The ammonia is provided by Pdx2. Can also use ribulose 5-phosphate and dihydroxyacetone phosphate as substrates, resulting from enzyme-catalyzed isomerization of RBP and G3P, respectively. The polypeptide is Pyridoxal 5'-phosphate synthase subunit Pdx1 (pdx1) (Plasmodium falciparum (isolate 3D7)).